Here is a 48-residue protein sequence, read N- to C-terminus: U-reduvitoxin-Pr5a (48 aa).

The N-terminal stretch at 1–19 (MRLFLIFTFIVASLASVYG) is a signal peptide. 3 disulfides stabilise this stretch: cysteine 20/cysteine 34, cysteine 27/cysteine 39, and cysteine 33/cysteine 44.

Belongs to the venom Ptu1-like knottin family. As to expression, expressed by the venom gland.

The protein resides in the secreted. In terms of biological role, binds reversibly and blocks P/Q-type voltage-gated calcium channels (Cav). The polypeptide is U-reduvitoxin-Pr5a (Platymeris rhadamanthus (Red spot assassin bug)).